Reading from the N-terminus, the 348-residue chain is MTAPSQVLKIRCPDDWHLHLRDGDMLKTVVPYTSEIYGRAIVMPNLAPPVTTVEAAVAYRQRILDAVPAGHDFTPLMTCYLTDSLDPNELERGFNEGVFTAAKLYPANATTNSSHGVTSVDAIMPVLERMEKIGMPLLVHGEVTHADIDIFDREARFIESVMEPLRQRLTALKVVFEHITTKDAADYVRDGNERLAATITPQHLMFNRNHMLVGGVRPHLYCLPILKRNIHQQALRELVASGFNRVFLGTDSAPHARHRKESSCGCAGCFNAPTALGSYATVFEEMNALQHFEAFCSVNGPQFYGLPVNDTFIELVREEQQVAESIALTDDTLVPFLAGETVRWSVKQ.

H17 and H19 together coordinate Zn(2+). Residues 19-21 (HLR) and N45 each bind substrate. The Zn(2+) site is built by K103, H140, and H178. Residue K103 is modified to N6-carboxylysine. Residue H140 participates in substrate binding. L223 lines the substrate pocket. D251 serves as a coordination point for Zn(2+). D251 is a catalytic residue. Substrate-binding residues include H255 and A267.

It belongs to the metallo-dependent hydrolases superfamily. DHOase family. Class II DHOase subfamily. In terms of assembly, homodimer. Requires Zn(2+) as cofactor.

It carries out the reaction (S)-dihydroorotate + H2O = N-carbamoyl-L-aspartate + H(+). It functions in the pathway pyrimidine metabolism; UMP biosynthesis via de novo pathway; (S)-dihydroorotate from bicarbonate: step 3/3. Its function is as follows. Catalyzes the reversible cyclization of carbamoyl aspartate to dihydroorotate. This chain is Dihydroorotase, found in Escherichia coli O6:H1 (strain CFT073 / ATCC 700928 / UPEC).